The primary structure comprises 146 residues: Kappa-casein (146 aa).

Thr97, Thr107, Thr112, and Thr118 each carry an O-linked (GalNAc...) threonine glycan. A Phosphothreonine modification is found at Thr121. At Ser125 the chain carries Phosphoserine; alternate. Ser125 is a glycosylation site (O-linked (GalNAc...) serine; alternate). The O-linked (GalNAc...) threonine glycan is linked to Thr142. Ser143 bears the Phosphoserine mark.

Belongs to the kappa-casein family. In terms of tissue distribution, mammary gland specific. Secreted in milk.

The protein resides in the secreted. In terms of biological role, kappa-casein stabilizes micelle formation, preventing casein precipitation in milk. This chain is Kappa-casein (CSN3), found in Panthera uncia (Snow leopard).